The sequence spans 75 residues: DNA-directed RNA polymerase subunit omega (75 aa).

The protein belongs to the RNA polymerase subunit omega family. As to quaternary structure, in cyanobacteria the RNAP catalytic core is composed of 2 alpha, 1 beta, 1 beta', 1 gamma and 1 omega subunit. When a sigma factor is associated with the core the holoenzyme is formed, which can initiate transcription.

It carries out the reaction RNA(n) + a ribonucleoside 5'-triphosphate = RNA(n+1) + diphosphate. Its function is as follows. Promotes RNA polymerase assembly. Latches the N- and C-terminal regions of the beta' subunit thereby facilitating its interaction with the beta and alpha subunits. This Parasynechococcus marenigrum (strain WH8102) protein is DNA-directed RNA polymerase subunit omega.